A 4466-amino-acid polypeptide reads, in one-letter code: Dynein beta chain, ciliary (4466 aa).

The stem stretch occupies residues 1-1813 (MGDVVDARLD…YANICDAQFK (1813 aa)). An ATP-binding site is contributed by 154 to 161 (AGQVKGKT). Coiled-coil stretches lie at residues 482–502 (QEFL…DRRL), 627–643 (QKYE…EQKV), 734–805 (VLEV…WTKQ), 1036–1056 (TLDQ…EADE), 1306–1337 (WLEI…AWDA), and 1443–1468 (LLKS…MTSK). AAA regions lie at residues 1814-2035 (YSYE…VLVV), 2095-2316 (KVVK…IRFK), 2422-2669 (ELDP…VFQG), and 2767-3016 (TYNE…ERRY). ATP contacts are provided by residues 1852-1859 (GPAGTGKT), 2133-2140 (GNAGTGKS), 2460-2467 (GNAGLGKS), and 2805-2812 (GVGGSGKQ). 3 coiled-coil regions span residues 3033 to 3134 (SLLA…AKAE), 3263 to 3325 (EPKR…SRTI), and 3573 to 3642 (QERP…EEAK). Residues 3033 to 3325 (SLLAMKSKEL…QEAEATSRTI (293 aa)) are stalk. AAA stretches follow at residues 3409–3636 (LTDD…EISV) and 3846–4072 (VRNF…VLYN).

It belongs to the dynein heavy chain family. Consists of at least two heavy chains (alpha and beta), three intermediate chains and several light chains.

It is found in the cell projection. It localises to the cilium. The protein localises to the flagellum. The protein resides in the cytoplasm. Its subcellular location is the cytoskeleton. It is found in the flagellum axoneme. Force generating protein of eukaryotic cilia and flagella. Produces force towards the minus ends of microtubules. Dynein has ATPase activity; the force-producing power stroke is thought to occur on release of ADP. This chain is Dynein beta chain, ciliary, found in Heliocidaris crassispina (Sea urchin).